The sequence spans 218 residues: Oxaloacetate decarboxylase, mitochondrial (218 aa).

Residues 1–18 constitute a mitochondrion transit peptide; it reads MNKFWETGRKIVAVGRNY. Mg(2+) contacts are provided by Glu-63, Glu-65, and Asp-94.

This sequence belongs to the FAH family. As to quaternary structure, homodimer. Requires Mg(2+) as cofactor. It depends on Mn(2+) as a cofactor.

The protein resides in the mitochondrion. Its subcellular location is the cytoplasm. It localises to the cytosol. It carries out the reaction a 3-acylpyruvate + H2O = a carboxylate + pyruvate + H(+). The enzyme catalyses acetylpyruvate + H2O = acetate + pyruvate + H(+). The catalysed reaction is 3-fumarylpyruvate + H2O = fumarate + pyruvate + H(+). It catalyses the reaction oxaloacetate + H(+) = pyruvate + CO2. In terms of biological role, mitochondrial protein that acts as an oxaloacetate decarboxylase (ODx), catalyzing the decarboxylation of oxaloacetate (OAA) to pyruvate and CO(2), and as such is likely a regulatory enzyme in the TCA cycle. Also displays acylpyruvase activity, being able to hydrolyze acetylpyruvate and fumarylpyruvate in vitro. The chain is Oxaloacetate decarboxylase, mitochondrial (fahd1) from Dictyostelium discoideum (Social amoeba).